The chain runs to 437 residues: 3-phosphoshikimate 1-carboxyvinyltransferase (437 aa).

3 residues coordinate 3-phosphoshikimate: Lys28, Ser29, and Arg33. Lys28 provides a ligand contact to phosphoenolpyruvate. 2 residues coordinate phosphoenolpyruvate: Gly97 and Arg125. Positions 168, 169, 170, 316, and 343 each coordinate 3-phosphoshikimate. Gln170 serves as a coordination point for phosphoenolpyruvate. The active-site Proton acceptor is the Glu316. Positions 347, 388, and 413 each coordinate phosphoenolpyruvate.

This sequence belongs to the EPSP synthase family. In terms of assembly, monomer.

Its subcellular location is the cytoplasm. It catalyses the reaction 3-phosphoshikimate + phosphoenolpyruvate = 5-O-(1-carboxyvinyl)-3-phosphoshikimate + phosphate. The protein operates within metabolic intermediate biosynthesis; chorismate biosynthesis; chorismate from D-erythrose 4-phosphate and phosphoenolpyruvate: step 6/7. Catalyzes the transfer of the enolpyruvyl moiety of phosphoenolpyruvate (PEP) to the 5-hydroxyl of shikimate-3-phosphate (S3P) to produce enolpyruvyl shikimate-3-phosphate and inorganic phosphate. The polypeptide is 3-phosphoshikimate 1-carboxyvinyltransferase (Rhodococcus erythropolis (strain PR4 / NBRC 100887)).